The primary structure comprises 259 residues: Early E4 30 kDa protein (259 aa).

Belongs to the adenoviridae E4 30 to 34 kDa protein family. As to quaternary structure, interacts with E1B-55k.

It localises to the host nucleus. It is found in the host cytoplasm. Plays a major role to prevent cellular inhibition of viral genome replication by nuclear bodies. Assembles an SCF-like E3 ubiquitin ligase complex based on the cellular proteins ELOB, ELOC, CUL5 and RBX1, in cooperation with viral E1B-55K. This viral RING-type ligase ubiquitinates cellular substrates prior to proteasomal degradation: p53/TP53, LIG4, MRE11-RAD50-NBS1 (MRN) complex, ITGA3, DAXX and BLM. In Canine adenovirus serotype 2 (strain Toronto A 26-61) (CAdV-2), this protein is Early E4 30 kDa protein.